The primary structure comprises 98 residues: NADH-ubiquinone oxidoreductase chain 4L (98 aa).

3 consecutive transmembrane segments (helical) span residues 1–21, 26–46, and 61–81; these read MPLI…GVLI, LMSS…LVSL, and LILL…LVMV.

The protein belongs to the complex I subunit 4L family. Core subunit of respiratory chain NADH dehydrogenase (Complex I) which is composed of 45 different subunits.

The protein resides in the mitochondrion inner membrane. It carries out the reaction a ubiquinone + NADH + 5 H(+)(in) = a ubiquinol + NAD(+) + 4 H(+)(out). Its function is as follows. Core subunit of the mitochondrial membrane respiratory chain NADH dehydrogenase (Complex I) which catalyzes electron transfer from NADH through the respiratory chain, using ubiquinone as an electron acceptor. Part of the enzyme membrane arm which is embedded in the lipid bilayer and involved in proton translocation. This chain is NADH-ubiquinone oxidoreductase chain 4L (MT-ND4L), found in Nycticebus coucang (Slow loris).